Consider the following 282-residue polypeptide: Bis(5'-nucleosyl)-tetraphosphatase, symmetrical (282 aa).

Belongs to the Ap4A hydrolase family.

The enzyme catalyses P(1),P(4)-bis(5'-adenosyl) tetraphosphate + H2O = 2 ADP + 2 H(+). In terms of biological role, hydrolyzes diadenosine 5',5'''-P1,P4-tetraphosphate to yield ADP. This is Bis(5'-nucleosyl)-tetraphosphatase, symmetrical from Burkholderia mallei (strain NCTC 10247).